The sequence spans 715 residues: Lanosterol synthase erg7B (715 aa).

Residues 111–153 (AIEIKNYLMARANPVDGGWGLHSEGDSSVFGTSLNYTVLRLLG) form a PFTB 1 repeat. The active-site Proton donor is Asp445. 2 PFTB repeats span residues 550–590 (IQRG…RSAG) and 599–640 (VRRG…VVQT).

The protein belongs to the terpene cyclase/mutase family.

The protein localises to the lipid droplet. The protein resides in the endoplasmic reticulum membrane. The enzyme catalyses (S)-2,3-epoxysqualene = lanosterol. The protein operates within steroid metabolism; ergosterol biosynthesis. Its function is as follows. Lanosterol synthase; part of the third module of ergosterol biosynthesis pathway that includes the late steps of the pathway. ERG7A and ERG7B catalyze the cyclization of (S)-2,3 oxidosqualene to lanosterol, a reaction that forms the sterol core. The third module or late pathway involves the ergosterol synthesis itself through consecutive reactions that mainly occur in the endoplasmic reticulum (ER) membrane. Firstly, the squalene synthase erg9 catalyzes the condensation of 2 farnesyl pyrophosphate moieties to form squalene, which is the precursor of all steroids. Squalene synthase is crucial for balancing the incorporation of farnesyl diphosphate (FPP) into sterol and nonsterol isoprene synthesis. Secondly, squalene is converted into lanosterol by the consecutive action of the squalene epoxidase erg1 and the lanosterol synthase erg7. Then, the delta(24)-sterol C-methyltransferase erg6 methylates lanosterol at C-24 to produce eburicol. Eburicol is the substrate of the sterol 14-alpha demethylase encoded by cyp51A and cyp51B, to yield 4,4,24-trimethyl ergosta-8,14,24(28)-trienol. The C-14 reductase erg24 then reduces the C14=C15 double bond which leads to 4,4-dimethylfecosterol. A sequence of further demethylations at C-4, involving the C-4 demethylation complex containing the C-4 methylsterol oxidases erg25A or erg25B, the sterol-4-alpha-carboxylate 3-dehydrogenase erg26 and the 3-keto-steroid reductase erg27, leads to the production of fecosterol via 4-methylfecosterol. The C-8 sterol isomerase erg2 then catalyzes the reaction which results in unsaturation at C-7 in the B ring of sterols and thus converts fecosterol to episterol. The sterol-C5-desaturase erg3B then catalyzes the introduction of a C-5 double bond in the B ring to produce 5-dehydroepisterol. The 2 other sterol-C5-desaturases, erg3A and erg3C, seem to be less important in ergosterol biosynthesis. The C-22 sterol desaturase erg5 further converts 5-dehydroepisterol into ergosta-5,7,22,24(28)-tetraen-3beta-ol by forming the C-22(23) double bond in the sterol side chain. Finally, ergosta-5,7,22,24(28)-tetraen-3beta-ol is substrate of the C-24(28) sterol reductases erg4A and erg4B to produce ergosterol. Possible alternative sterol biosynthetic pathways might exist from fecosterol to ergosterol, depending on the activities of the erg3 isoforms. The chain is Lanosterol synthase erg7B from Aspergillus fumigatus (strain ATCC MYA-4609 / CBS 101355 / FGSC A1100 / Af293) (Neosartorya fumigata).